The chain runs to 156 residues: Small ribosomal subunit protein uS7 (156 aa).

This sequence belongs to the universal ribosomal protein uS7 family. Part of the 30S ribosomal subunit. Contacts proteins S9 and S11.

Functionally, one of the primary rRNA binding proteins, it binds directly to 16S rRNA where it nucleates assembly of the head domain of the 30S subunit. Is located at the subunit interface close to the decoding center, probably blocks exit of the E-site tRNA. The polypeptide is Small ribosomal subunit protein uS7 (Neisseria meningitidis serogroup C (strain 053442)).